We begin with the raw amino-acid sequence, 172 residues long: Epididymal secretory protein 4 (172 aa).

A signal peptide spans 1–21 (MIAVLLLVFGMTPDYIFPVSA). Cysteines 82 and 167 form a disulfide.

It belongs to the calycin superfamily. Lipocalin family. As to expression, secreted by the epididymal epithelial cells.

The protein localises to the secreted. Its subcellular location is the extracellular space. Its function is as follows. Could transport small hydrophobic molecules into the epididymal fluid during the sperm maturation. Binds to the head region of spermatozoa and plays a key role in sperm maturation. The sequence is that of Epididymal secretory protein 4 from Zootoca vivipara (Common lizard).